The following is a 263-amino-acid chain: Small ribosomal subunit protein uS2 (263 aa).

N-acetylserine is present on serine 2. Positions 211–242 are enriched in acidic residues; it reads EQTAEEEAEAAEGAEFEVEEEEVEQEWQEPAE. Positions 211 to 263 are disordered; sequence EQTAEEEAEAAEGAEFEVEEEEVEQEWQEPAEADWNASAPPADWNDAANAEAF. A compositionally biased stretch (low complexity) spans 246-263; the sequence is NASAPPADWNDAANAEAF.

It belongs to the universal ribosomal protein uS2 family. In terms of assembly, component of the small ribosomal subunit. Mature ribosomes consist of a small (40S) and a large (60S) subunit. The 40S subunit contains about 33 different proteins and 1 molecule of RNA (18S). The 60S subunit contains about 49 different proteins and 3 molecules of RNA (25S, 5.8S and 5S). Interacts with RPS21.

It is found in the cytoplasm. Its function is as follows. Required for the assembly and/or stability of the 40S ribosomal subunit. Required for the processing of the 20S rRNA-precursor to mature 18S rRNA in a late step of the maturation of 40S ribosomal subunits. In Komagataella phaffii (strain GS115 / ATCC 20864) (Yeast), this protein is Small ribosomal subunit protein uS2.